Reading from the N-terminus, the 311-residue chain is 4-diphosphocytidyl-2-C-methyl-D-erythritol kinase (311 aa).

Residue lysine 10 is part of the active site. Residue 105–115 coordinates ATP; sequence PVAGGMAGGSA. Residue aspartate 146 is part of the active site.

It belongs to the GHMP kinase family. IspE subfamily.

It carries out the reaction 4-CDP-2-C-methyl-D-erythritol + ATP = 4-CDP-2-C-methyl-D-erythritol 2-phosphate + ADP + H(+). It functions in the pathway isoprenoid biosynthesis; isopentenyl diphosphate biosynthesis via DXP pathway; isopentenyl diphosphate from 1-deoxy-D-xylulose 5-phosphate: step 3/6. In terms of biological role, catalyzes the phosphorylation of the position 2 hydroxy group of 4-diphosphocytidyl-2C-methyl-D-erythritol. This chain is 4-diphosphocytidyl-2-C-methyl-D-erythritol kinase, found in Corynebacterium glutamicum (strain ATCC 13032 / DSM 20300 / JCM 1318 / BCRC 11384 / CCUG 27702 / LMG 3730 / NBRC 12168 / NCIMB 10025 / NRRL B-2784 / 534).